The primary structure comprises 396 residues: Elongation factor Tu (396 aa).

Residues 10 to 205 enclose the tr-type G domain; that stretch reads KSHANIGTIG…AVDEYIPTPE (196 aa). A G1 region spans residues 19-26; it reads GHVDHGKT. 19–26 serves as a coordination point for GTP; it reads GHVDHGKT. Residue threonine 26 participates in Mg(2+) binding. Positions 61-65 are G2; that stretch reads GITIS. Residues 82-85 are G3; sequence DCPG. Residues 82–86 and 137–140 contribute to the GTP site; these read DCPGH and NKCD. The G4 stretch occupies residues 137–140; that stretch reads NKCD. Residues 175–177 are G5; the sequence is SAL. Threonine 385 carries the post-translational modification Phosphothreonine.

Belongs to the TRAFAC class translation factor GTPase superfamily. Classic translation factor GTPase family. EF-Tu/EF-1A subfamily. In terms of assembly, monomer. Interacts with BrxC. Phosphorylated on Thr-385 in vitro by PrkC in the presence of poly-L-lysine or myelin basic protein, dephosphorylated by PrpC.

The protein resides in the cytoplasm. The catalysed reaction is GTP + H2O = GDP + phosphate + H(+). In terms of biological role, GTP hydrolase that promotes the GTP-dependent binding of aminoacyl-tRNA to the A-site of ribosomes during protein biosynthesis. This chain is Elongation factor Tu, found in Bacillus subtilis (strain 168).